A 239-amino-acid polypeptide reads, in one-letter code: Sugar fermentation stimulation protein homolog (239 aa).

This sequence belongs to the SfsA family.

In Methylobacterium sp. (strain 4-46), this protein is Sugar fermentation stimulation protein homolog.